The chain runs to 280 residues: Diaminopimelate epimerase (280 aa).

Substrate-binding residues include Asn13 and Asn66. Cys75 (proton donor) is an active-site residue. Residues 76 to 77, Asn165, Asn198, and 216 to 217 contribute to the substrate site; these read GN and ER. The active-site Proton acceptor is Cys225. Substrate is bound at residue 226-227; that stretch reads GT.

Belongs to the diaminopimelate epimerase family. Homodimer.

The protein localises to the cytoplasm. The catalysed reaction is (2S,6S)-2,6-diaminopimelate = meso-2,6-diaminopimelate. The protein operates within amino-acid biosynthesis; L-lysine biosynthesis via DAP pathway; DL-2,6-diaminopimelate from LL-2,6-diaminopimelate: step 1/1. Its function is as follows. Catalyzes the stereoinversion of LL-2,6-diaminopimelate (L,L-DAP) to meso-diaminopimelate (meso-DAP), a precursor of L-lysine and an essential component of the bacterial peptidoglycan. The polypeptide is Diaminopimelate epimerase (Cyanothece sp. (strain PCC 7425 / ATCC 29141)).